A 614-amino-acid chain; its full sequence is Heat shock protein SSB1 (614 aa).

Residues 1-392 are nucleotide binding domain (NBD); that stretch reads MSTEVYDGAI…ILSGKATSAE (392 aa). Residues 16–18, Lys74, 206–208, 272–279, and Gly343 contribute to the ATP site; these read TTY, GGT, and ERAKRTLS. Residues 393–403 are inter-domain linker; that stretch reads TADLLLLDVVP. Residues 404-614 form a substrate binding domain (SBD) region; that stretch reads LSLGVAMEGN…RAVTKAMSSR (211 aa). Residues 517 to 613 form a lid domain (SBDalpha) region; that stretch reads TSEIENMISE…KRAVTKAMSS (97 aa). Positions 575 to 583 match the Nuclear export signal motif; sequence IENTMSEAM.

Belongs to the heat shock protein 70 family. In terms of assembly, interacts with HAT1 in starvation conditions.

It is found in the nucleus. Its subcellular location is the cytoplasm. The catalysed reaction is ATP + H2O = ADP + phosphate + H(+). In terms of biological role, chaperone that interacts with the histone acetyltransferase HAT1 and mediates its translocation from the nucleus to the cytoplasm during germination and starvation conditions. Within the cytoplasm, HAT1 regulates autophagy via acetylation of the autophagy-related proteins ATG3 and ATG9. The protein is Heat shock protein SSB1 of Pyricularia oryzae (strain 70-15 / ATCC MYA-4617 / FGSC 8958) (Rice blast fungus).